A 385-amino-acid polypeptide reads, in one-letter code: Homoserine O-succinyltransferase (385 aa).

The region spanning 46 to 355 is the AB hydrolase-1 domain; sequence NAILICHALS…NSQHGHDAFL (310 aa). Ser-151 serves as the catalytic Nucleophile. Substrate is bound at residue Arg-221. Residues Asp-318 and His-351 contribute to the active site. Asp-352 is a substrate binding site.

This sequence belongs to the AB hydrolase superfamily. MetX family. As to quaternary structure, homodimer.

The protein resides in the cytoplasm. The enzyme catalyses L-homoserine + succinyl-CoA = O-succinyl-L-homoserine + CoA. The protein operates within amino-acid biosynthesis; L-methionine biosynthesis via de novo pathway; O-succinyl-L-homoserine from L-homoserine: step 1/1. Its function is as follows. Transfers a succinyl group from succinyl-CoA to L-homoserine, forming succinyl-L-homoserine. The sequence is that of Homoserine O-succinyltransferase from Hydrogenovibrio crunogenus (strain DSM 25203 / XCL-2) (Thiomicrospira crunogena).